A 394-amino-acid chain; its full sequence is Enoyl-[acyl-carrier-protein] reductase [NADH] (394 aa).

Residues 48–53 (GASTGY), 74–75 (YE), 111–112 (DA), and 139–140 (LA) contribute to the NAD(+) site. Tyrosine 225 provides a ligand contact to substrate. Tyrosine 235 (proton donor) is an active-site residue. Residues lysine 244 and 273–275 (LVT) each bind NAD(+).

Belongs to the TER reductase family. In terms of assembly, monomer.

The enzyme catalyses a 2,3-saturated acyl-[ACP] + NAD(+) = a (2E)-enoyl-[ACP] + NADH + H(+). It participates in lipid metabolism; fatty acid biosynthesis. Its function is as follows. Involved in the final reduction of the elongation cycle of fatty acid synthesis (FAS II). Catalyzes the reduction of a carbon-carbon double bond in an enoyl moiety that is covalently linked to an acyl carrier protein (ACP). The protein is Enoyl-[acyl-carrier-protein] reductase [NADH] of Opitutus terrae (strain DSM 11246 / JCM 15787 / PB90-1).